Consider the following 103-residue polypeptide: NADH-quinone oxidoreductase subunit K 1 (103 aa).

Helical transmembrane passes span 7–27 (ISWF…GFLF), 31–51 (IITV…SFVT), and 63–83 (LFTF…LAII).

Belongs to the complex I subunit 4L family. As to quaternary structure, NDH-1 is composed of 14 different subunits. Subunits NuoA, H, J, K, L, M, N constitute the membrane sector of the complex.

Its subcellular location is the cell inner membrane. The catalysed reaction is a quinone + NADH + 5 H(+)(in) = a quinol + NAD(+) + 4 H(+)(out). NDH-1 shuttles electrons from NADH, via FMN and iron-sulfur (Fe-S) centers, to quinones in the respiratory chain. The immediate electron acceptor for the enzyme in this species is believed to be ubiquinone. Couples the redox reaction to proton translocation (for every two electrons transferred, four hydrogen ions are translocated across the cytoplasmic membrane), and thus conserves the redox energy in a proton gradient. This Solibacter usitatus (strain Ellin6076) protein is NADH-quinone oxidoreductase subunit K 1.